A 294-amino-acid polypeptide reads, in one-letter code: Nucleotide-binding protein DICTH_1001 (294 aa).

10 to 17 (GLSGAGKS) provides a ligand contact to ATP. 61–64 (DIRT) lines the GTP pocket.

Belongs to the RapZ-like family.

In terms of biological role, displays ATPase and GTPase activities. The sequence is that of Nucleotide-binding protein DICTH_1001 from Dictyoglomus thermophilum (strain ATCC 35947 / DSM 3960 / H-6-12).